The sequence spans 336 residues: Glycerol-3-phosphate dehydrogenase [NAD(P)+] (336 aa).

5 residues coordinate NADPH: S11, W12, R32, R33, and K110. Residues K110 and G140 each coordinate sn-glycerol 3-phosphate. Position 144 (A144) interacts with NADPH. Sn-glycerol 3-phosphate contacts are provided by K195, D248, S258, R259, and N260. Catalysis depends on K195, which acts as the Proton acceptor. R259 contacts NADPH. Residues V284 and E286 each contribute to the NADPH site.

Belongs to the NAD-dependent glycerol-3-phosphate dehydrogenase family.

The protein localises to the cytoplasm. The enzyme catalyses sn-glycerol 3-phosphate + NAD(+) = dihydroxyacetone phosphate + NADH + H(+). The catalysed reaction is sn-glycerol 3-phosphate + NADP(+) = dihydroxyacetone phosphate + NADPH + H(+). The protein operates within membrane lipid metabolism; glycerophospholipid metabolism. In terms of biological role, catalyzes the reduction of the glycolytic intermediate dihydroxyacetone phosphate (DHAP) to sn-glycerol 3-phosphate (G3P), the key precursor for phospholipid synthesis. This chain is Glycerol-3-phosphate dehydrogenase [NAD(P)+], found in Nocardia farcinica (strain IFM 10152).